A 360-amino-acid polypeptide reads, in one-letter code: Histidinol-phosphate aminotransferase (360 aa).

N6-(pyridoxal phosphate)lysine is present on K224.

The protein belongs to the class-II pyridoxal-phosphate-dependent aminotransferase family. Histidinol-phosphate aminotransferase subfamily. Requires pyridoxal 5'-phosphate as cofactor.

It catalyses the reaction L-histidinol phosphate + 2-oxoglutarate = 3-(imidazol-4-yl)-2-oxopropyl phosphate + L-glutamate. Its pathway is amino-acid biosynthesis; L-histidine biosynthesis; L-histidine from 5-phospho-alpha-D-ribose 1-diphosphate: step 7/9. This chain is Histidinol-phosphate aminotransferase, found in Methanococcoides burtonii (strain DSM 6242 / NBRC 107633 / OCM 468 / ACE-M).